Reading from the N-terminus, the 227-residue chain is Cytochrome c oxidase subunit 2 (227 aa).

Residues 1–14 (MAYPFELGFQDATS) are Mitochondrial intermembrane-facing. Residues 15–45 (PIMEELLHFHDHTLMIVFLISSLVLYIISLM) traverse the membrane as a helical segment. Topologically, residues 46–59 (LTTKLTHTSTMDAQ) are mitochondrial matrix. The chain crosses the membrane as a helical span at residues 60–87 (EVETIWTILPAIILILIALPSLRILYMM). The Mitochondrial intermembrane portion of the chain corresponds to 88–227 (DEINDPSLTV…HFENWSSSML (140 aa)). Cu cation is bound by residues His-161, Cys-196, Glu-198, Cys-200, His-204, and Met-207. Mg(2+) is bound at residue Glu-198.

The protein belongs to the cytochrome c oxidase subunit 2 family. As to quaternary structure, component of the cytochrome c oxidase (complex IV, CIV), a multisubunit enzyme composed of 14 subunits. The complex is composed of a catalytic core of 3 subunits MT-CO1, MT-CO2 and MT-CO3, encoded in the mitochondrial DNA, and 11 supernumerary subunits COX4I, COX5A, COX5B, COX6A, COX6B, COX6C, COX7A, COX7B, COX7C, COX8 and NDUFA4, which are encoded in the nuclear genome. The complex exists as a monomer or a dimer and forms supercomplexes (SCs) in the inner mitochondrial membrane with NADH-ubiquinone oxidoreductase (complex I, CI) and ubiquinol-cytochrome c oxidoreductase (cytochrome b-c1 complex, complex III, CIII), resulting in different assemblies (supercomplex SCI(1)III(2)IV(1) and megacomplex MCI(2)III(2)IV(2)). Found in a complex with TMEM177, COA6, COX18, COX20, SCO1 and SCO2. Interacts with TMEM177 in a COX20-dependent manner. Interacts with COX20. Interacts with COX16. Cu cation is required as a cofactor.

It is found in the mitochondrion inner membrane. The enzyme catalyses 4 Fe(II)-[cytochrome c] + O2 + 8 H(+)(in) = 4 Fe(III)-[cytochrome c] + 2 H2O + 4 H(+)(out). Its function is as follows. Component of the cytochrome c oxidase, the last enzyme in the mitochondrial electron transport chain which drives oxidative phosphorylation. The respiratory chain contains 3 multisubunit complexes succinate dehydrogenase (complex II, CII), ubiquinol-cytochrome c oxidoreductase (cytochrome b-c1 complex, complex III, CIII) and cytochrome c oxidase (complex IV, CIV), that cooperate to transfer electrons derived from NADH and succinate to molecular oxygen, creating an electrochemical gradient over the inner membrane that drives transmembrane transport and the ATP synthase. Cytochrome c oxidase is the component of the respiratory chain that catalyzes the reduction of oxygen to water. Electrons originating from reduced cytochrome c in the intermembrane space (IMS) are transferred via the dinuclear copper A center (CU(A)) of subunit 2 and heme A of subunit 1 to the active site in subunit 1, a binuclear center (BNC) formed by heme A3 and copper B (CU(B)). The BNC reduces molecular oxygen to 2 water molecules using 4 electrons from cytochrome c in the IMS and 4 protons from the mitochondrial matrix. This chain is Cytochrome c oxidase subunit 2 (MT-CO2), found in Tamias merriami (Merriam's chipmunk).